The chain runs to 843 residues: Neuroligin-1 (843 aa).

An N-terminal signal peptide occupies residues 1–45 (MALPRCMWPNYVWRAMMACVVHRGSGAPLTLCLLGCLLQTFHVLS). At 46–697 (QKLDDVDPLV…DQRDYSTELS (652 aa)) the chain is on the extracellular side. N-linked (GlcNAc...) (complex) asparagine glycosylation occurs at asparagine 109. A disulfide bridge links cysteine 117 with cysteine 153. Residues 167–190 (LTKKHTDDLGDNDGAEDEDIRDSG) are disordered. The span at 175 to 186 (LGDNDGAEDEDI) shows a compositional bias: acidic residues. Asparagine 303 and asparagine 343 each carry an N-linked (GlcNAc...) (complex) asparagine glycan. Cystine bridges form between cysteine 342-cysteine 353 and cysteine 512-cysteine 546. Asparagine 547 is a glycosylation site (N-linked (GlcNAc...) asparagine). The segment at 647–688 (TKVPSTDITLRPTRKNSTPVTSAFPTAKQDDPKQQPSPFSVD) is disordered. A compositionally biased stretch (polar residues) spans 661–670 (KNSTPVTSAF). O-linked (GalNAc...) serine glycosylation is found at serine 683 and serine 686. A helical transmembrane segment spans residues 698 to 718 (VTIAVGASLLFLNILAFAALY). Residues 719 to 843 (YKKDKRRHDV…HPHSHSTTRV (125 aa)) are Cytoplasmic-facing. The interval 822–843 (GGQNNTLPHPHPHPHSHSTTRV) is disordered. A compositionally biased stretch (basic residues) spans 831–843 (PHPHPHSHSTTRV).

Belongs to the type-B carboxylesterase/lipase family. As to quaternary structure, interacts with neurexins NRXN1, NRXN2 and NRXN3. Interaction with neurexins is mediated by heparan sulfate glycan modification on neurexin. Interacts (via its C-terminus) with DLG4/PSD-95 (via PDZ domain 3). Interacts with AIP1, GOPC and PDZRN3. Interacts with NLGN3. In terms of tissue distribution, brain and arteries (at protein level). Expressed in olfactory bulb. Detected in brain.

The protein resides in the cell membrane. It localises to the postsynaptic density. The protein localises to the synaptic cleft. Its subcellular location is the synaptic cell membrane. In terms of biological role, cell surface protein involved in cell-cell-interactions via its interactions with neurexin family members. Plays a role in synapse function and synaptic signal transmission, and probably mediates its effects by recruiting and clustering other synaptic proteins. May promote the initial formation of synapses, but is not essential for this. In vitro, triggers the de novo formation of presynaptic structures. May be involved in specification of excitatory synapses. Required to maintain wakefulness quality and normal synchrony of cerebral cortex activity during wakefulness and sleep. The protein is involved in nervous system development. This Mus musculus (Mouse) protein is Neuroligin-1 (Nlgn1).